The chain runs to 235 residues: Large ribosomal subunit protein uL4 (235 aa).

A disordered region spans residues 45-75 (RAGTASTKTRGEVSGGGRKPWPQKHTGRARH). Residues 65-75 (WPQKHTGRARH) are compositionally biased toward basic residues.

The protein belongs to the universal ribosomal protein uL4 family. As to quaternary structure, part of the 50S ribosomal subunit.

Its function is as follows. One of the primary rRNA binding proteins, this protein initially binds near the 5'-end of the 23S rRNA. It is important during the early stages of 50S assembly. It makes multiple contacts with different domains of the 23S rRNA in the assembled 50S subunit and ribosome. In terms of biological role, forms part of the polypeptide exit tunnel. This Thermotoga petrophila (strain ATCC BAA-488 / DSM 13995 / JCM 10881 / RKU-1) protein is Large ribosomal subunit protein uL4.